Here is a 388-residue protein sequence, read N- to C-terminus: Pepsin A-2/A-3 (388 aa).

The first 15 residues, 1 to 15 (MKWLLLLGLVALSEC), serve as a signal peptide directing secretion. Propeptides (activation peptide) lie at residues 16 to 40 (IIHKVPLVRKKSLRRNLSEHGLLKD) and 41 to 62 (FLKKHNFNPASKYFPQAEAPTL). Residues 76–385 (YFGTIGIGTP…DRANNQVGLA (310 aa)) enclose the Peptidase A1 domain. Asp-94 is an active-site residue. Cys-107 and Cys-112 form a disulfide bridge. The residue at position 130 (Ser-130) is a Phosphoserine. Cysteines 268 and 272 form a disulfide. Asp-277 is an active-site residue. The cysteines at positions 311 and 344 are disulfide-linked.

It belongs to the peptidase A1 family. Post-translationally, pepsin A-2 is phosphorylated, but not pepsin A-3. Each pepsinogen is converted to corresponding pepsin at pH 2.0 in part as a result of the release of a 47 AA activation segment and in part as a result of stepwise proteolytic cleavage via an intermediate form(s).

Its subcellular location is the secreted. The enzyme catalyses Preferential cleavage: hydrophobic, preferably aromatic, residues in P1 and P1' positions. Cleaves 1-Phe-|-Val-2, 4-Gln-|-His-5, 13-Glu-|-Ala-14, 14-Ala-|-Leu-15, 15-Leu-|-Tyr-16, 16-Tyr-|-Leu-17, 23-Gly-|-Phe-24, 24-Phe-|-Phe-25 and 25-Phe-|-Tyr-26 bonds in the B chain of insulin.. In terms of biological role, shows particularly broad specificity; although bonds involving phenylalanine and leucine are preferred, many others are also cleaved to some extent. In Macaca fuscata fuscata (Japanese macaque), this protein is Pepsin A-2/A-3.